The sequence spans 397 residues: Protein irld-34 (397 aa).

This chain is Protein irld-34, found in Caenorhabditis elegans.